Reading from the N-terminus, the 115-residue chain is Holo-[acyl-carrier-protein] synthase (115 aa).

Positions 5 and 51 each coordinate Mg(2+).

This sequence belongs to the P-Pant transferase superfamily. AcpS family. Mg(2+) serves as cofactor.

It is found in the cytoplasm. The enzyme catalyses apo-[ACP] + CoA = holo-[ACP] + adenosine 3',5'-bisphosphate + H(+). Its function is as follows. Transfers the 4'-phosphopantetheine moiety from coenzyme A to a Ser of acyl-carrier-protein. This chain is Holo-[acyl-carrier-protein] synthase, found in Helicobacter acinonychis (strain Sheeba).